The primary structure comprises 914 residues: Protein translocase subunit SecA (914 aa).

ATP contacts are provided by residues Q87, 105-109, and D508; that span reads GEGKT. Positions 898, 900, 909, and 910 each coordinate Zn(2+).

The protein belongs to the SecA family. As to quaternary structure, monomer and homodimer. Part of the essential Sec protein translocation apparatus which comprises SecA, SecYEG and auxiliary proteins SecDF-YajC and YidC. It depends on Zn(2+) as a cofactor.

Its subcellular location is the cell inner membrane. The protein localises to the cytoplasm. The catalysed reaction is ATP + H2O + cellular proteinSide 1 = ADP + phosphate + cellular proteinSide 2.. Functionally, part of the Sec protein translocase complex. Interacts with the SecYEG preprotein conducting channel. Has a central role in coupling the hydrolysis of ATP to the transfer of proteins into and across the cell membrane, serving both as a receptor for the preprotein-SecB complex and as an ATP-driven molecular motor driving the stepwise translocation of polypeptide chains across the membrane. The sequence is that of Protein translocase subunit SecA from Xylella fastidiosa (strain M12).